The primary structure comprises 205 residues: Probable 3'-5' exonuclease KapD (205 aa).

The 168-residue stretch at 6-173 (LLIIDFEFTM…DDALTAYKLF (168 aa)) folds into the Exonuclease domain. Residues aspartate 10, glutamate 12, and aspartate 104 each coordinate Mg(2+). Residue glutamate 12 is the Proton acceptor of the active site. Residue glutamate 12 coordinates AMP. The active-site Proton acceptor is the histidine 160. Position 160 (histidine 160) interacts with AMP. Mg(2+) is bound at residue aspartate 165.

Mg(2+) serves as cofactor.

Its function is as follows. Specifically inhibits the KinA pathway to sporulation. The polypeptide is Probable 3'-5' exonuclease KapD (kapD) (Bacillus subtilis (strain 168)).